The sequence spans 218 residues: Ribose-5-phosphate isomerase A (218 aa).

Residues Thr28–Thr31, Asp81–Asp84, and Lys94–Gly97 contribute to the substrate site. Glu103 functions as the Proton acceptor in the catalytic mechanism. Lys121 provides a ligand contact to substrate.

It belongs to the ribose 5-phosphate isomerase family. In terms of assembly, homodimer.

It catalyses the reaction aldehydo-D-ribose 5-phosphate = D-ribulose 5-phosphate. The protein operates within carbohydrate degradation; pentose phosphate pathway; D-ribose 5-phosphate from D-ribulose 5-phosphate (non-oxidative stage): step 1/1. Catalyzes the reversible conversion of ribose-5-phosphate to ribulose 5-phosphate. This Vibrio vulnificus (strain CMCP6) protein is Ribose-5-phosphate isomerase A.